The chain runs to 160 residues: SsrA-binding protein (160 aa).

The interval 136–160 (KRHVEKERDANREVQRAMRSKGKDD) is disordered.

The protein belongs to the SmpB family.

Its subcellular location is the cytoplasm. Required for rescue of stalled ribosomes mediated by trans-translation. Binds to transfer-messenger RNA (tmRNA), required for stable association of tmRNA with ribosomes. tmRNA and SmpB together mimic tRNA shape, replacing the anticodon stem-loop with SmpB. tmRNA is encoded by the ssrA gene; the 2 termini fold to resemble tRNA(Ala) and it encodes a 'tag peptide', a short internal open reading frame. During trans-translation Ala-aminoacylated tmRNA acts like a tRNA, entering the A-site of stalled ribosomes, displacing the stalled mRNA. The ribosome then switches to translate the ORF on the tmRNA; the nascent peptide is terminated with the 'tag peptide' encoded by the tmRNA and targeted for degradation. The ribosome is freed to recommence translation, which seems to be the essential function of trans-translation. In Ectopseudomonas mendocina (strain ymp) (Pseudomonas mendocina), this protein is SsrA-binding protein.